A 116-amino-acid polypeptide reads, in one-letter code: UPF0342 protein BH1149 (116 aa).

The protein belongs to the UPF0342 family.

The chain is UPF0342 protein BH1149 from Halalkalibacterium halodurans (strain ATCC BAA-125 / DSM 18197 / FERM 7344 / JCM 9153 / C-125) (Bacillus halodurans).